We begin with the raw amino-acid sequence, 92 residues long: YcgL domain-containing protein PBPRA1080 (92 aa).

Residues 1-84 (MLCSIYKSSK…PVTNLLHQYK (84 aa)) form the YcgL domain.

This is YcgL domain-containing protein PBPRA1080 from Photobacterium profundum (strain SS9).